Consider the following 877-residue polypeptide: MKKLNSSEFRQMFLDFFAEHGHMVMQSASLIPKDDPTLLWINSGVATMKKYFDGSVVPKNRRITSSQKSIRTNDIENVGKTARHQTLFEMLGNFSVGDYFKEEAIPWAWEFLTSPDWLDLDKDKLYVTVYPKDTEAHRIWHEVVGLPESHIVQLEDNFWDIGEGPCGPDSEIFYDRGQENNDVPEDDPENYPGGENARYLEIWNIVFSEFNHLPDGSYVEQPHKNIDTGMGLERVLSILQDAPTNFETDLFLPIIHATEEMSAGKKYGANKADDISFKIIADHIRAISFAIGDGALPGNTGRGYVLRRLLRRAALNGRKLGIDGAFLYKLVPVVGDIMKSHYPEVSDQAEFISKVVKNEEDRFGATLEAGLTLLDDLIDKAENSEDKTISGKDAFKMFDTYGFPYELTVEAAEDKGLKVDKDGFDAEMEAQKERARKARGNLQSMGSQDETLMKIKDKSVFEYGVYEEESQLVDIIVDDKLVDKADGEKATLIFDKTPFYAERGGQVADHGDIYDQEGNLVARVVDVQHAPNDQNLHFVDVVLPLVKGQTYKLKIDRARREGLRHSHSATHLLHAALRQVLGEHTHQAGSVVEPDYLRFDFTSLDPITPRELKNVEKIVNEKIWEAIQVKTTETDPETGKKMGALALFDGKYTDKVRVVQMDDFSIEFCGGTHCDNTSQIGVFKIISEQAIGAGVRRIEAVTSKLAYEYLAGRSDILDQIQAQVKATKVDGIQSKIASLQEELRSAEKQNAAYEAQINASKAGKIFDQVKTVGDLTVIATIADVKGMNDLREIADQWKSEGKSDVLILGAKSEDKANMLISLGQKALDKGLKAGDLIKSVAAIFGGGGGGRPNMAQAGGKNPEGLQDAIDAAVSQLD.

Positions 567, 571, 669, and 673 each coordinate Zn(2+).

The protein belongs to the class-II aminoacyl-tRNA synthetase family. Requires Zn(2+) as cofactor.

It is found in the cytoplasm. It catalyses the reaction tRNA(Ala) + L-alanine + ATP = L-alanyl-tRNA(Ala) + AMP + diphosphate. Catalyzes the attachment of alanine to tRNA(Ala) in a two-step reaction: alanine is first activated by ATP to form Ala-AMP and then transferred to the acceptor end of tRNA(Ala). Also edits incorrectly charged Ser-tRNA(Ala) and Gly-tRNA(Ala) via its editing domain. The chain is Alanine--tRNA ligase from Lactobacillus delbrueckii subsp. bulgaricus (strain ATCC 11842 / DSM 20081 / BCRC 10696 / JCM 1002 / NBRC 13953 / NCIMB 11778 / NCTC 12712 / WDCM 00102 / Lb 14).